The primary structure comprises 289 residues: Cysteine-rich venom protein Mr30 (289 aa).

Residues 1–24 form the signal peptide; sequence MLSTMQTVGAILMLSIVFVAGTKR. Glutamate 33 carries the 4-carboxyglutamate modification. In terms of domain architecture, SCP spans 62 to 184; that stretch reads VRMHNVIRAT…GEDRYFVCNY (123 aa).

The protein belongs to the CRISP family. Contains 11 disulfide bonds. In terms of tissue distribution, expressed by the venom duct.

It is found in the secreted. In terms of biological role, has no proteolytic activity. This chain is Cysteine-rich venom protein Mr30, found in Conus marmoreus (Marble cone).